A 49-amino-acid polypeptide reads, in one-letter code: SCAGSCKCKNCRCRSCRKSCCSCCPAGCNNCAKGCVCKEPASSKCSCCH.

The beta stretch occupies residues 1 to 16; it reads SCAGSCKCKNCRCRSC. Positions 2, 6, 8, 11, 13, 16, 20, 21, 23, 24, 28, 31, 35, 37, 45, 47, and 48 each coordinate a divalent metal cation. The segment at 17-49 is alpha; the sequence is RKSCCSCCPAGCNNCAKGCVCKEPASSKCSCCH.

It belongs to the metallothionein superfamily. Type 1 family.

In terms of biological role, metallothioneins have a high content of cysteine residues that bind various heavy metals. The sequence is that of Metallothionein from Phasianus colchicus colchicus (Black-necked pheasant).